Here is a 341-residue protein sequence, read N- to C-terminus: Glycerol-3-phosphate dehydrogenase [NAD(P)+] (341 aa).

NADPH contacts are provided by serine 14, phenylalanine 15, arginine 35, and lysine 108. Lysine 108 and glycine 136 together coordinate sn-glycerol 3-phosphate. Serine 140 contacts NADPH. Residues lysine 191, aspartate 244, serine 254, arginine 255, and asparagine 256 each contribute to the sn-glycerol 3-phosphate site. The Proton acceptor role is filled by lysine 191. Arginine 255 is a binding site for NADPH. Residues valine 279 and glutamate 281 each coordinate NADPH.

It belongs to the NAD-dependent glycerol-3-phosphate dehydrogenase family.

It is found in the cytoplasm. It catalyses the reaction sn-glycerol 3-phosphate + NAD(+) = dihydroxyacetone phosphate + NADH + H(+). The catalysed reaction is sn-glycerol 3-phosphate + NADP(+) = dihydroxyacetone phosphate + NADPH + H(+). Its pathway is membrane lipid metabolism; glycerophospholipid metabolism. Catalyzes the reduction of the glycolytic intermediate dihydroxyacetone phosphate (DHAP) to sn-glycerol 3-phosphate (G3P), the key precursor for phospholipid synthesis. The protein is Glycerol-3-phosphate dehydrogenase [NAD(P)+] of Pseudomonas putida (strain GB-1).